A 351-amino-acid polypeptide reads, in one-letter code: Protein Wnt-8b (351 aa).

The signal sequence occupies residues 1-22; that stretch reads MFLSKPSVYICLFTCVLQLSHS. A disulfide bridge connects residues cysteine 54 and cysteine 65. Residue asparagine 103 is glycosylated (N-linked (GlcNAc...) asparagine). Cystine bridges form between cysteine 104–cysteine 112, cysteine 114–cysteine 132, cysteine 180–cysteine 194, cysteine 182–cysteine 189, cysteine 256–cysteine 294, cysteine 272–cysteine 287, cysteine 291–cysteine 333, cysteine 309–cysteine 324, cysteine 311–cysteine 321, and cysteine 316–cysteine 317. Serine 186 carries O-palmitoleoyl serine lipidation. An N-linked (GlcNAc...) asparagine glycan is attached at asparagine 259.

Belongs to the Wnt family. Palmitoleoylation is required for efficient binding to frizzled receptors. Depalmitoleoylation leads to Wnt signaling pathway inhibition. Post-translationally, proteolytic processing by TIKI1 and TIKI2 promotes oxidation and formation of large disulfide-bond oligomers, leading to inactivation of WNT8B. In terms of tissue distribution, expression is restricted to the brain, and more specifically to the forebrain.

It is found in the secreted. The protein resides in the extracellular space. Its subcellular location is the extracellular matrix. Functionally, ligand for members of the frizzled family of seven transmembrane receptors. May play an important role in the development and differentiation of certain forebrain structures, notably the hippocampus. The protein is Protein Wnt-8b (WNT8B) of Homo sapiens (Human).